Reading from the N-terminus, the 335-residue chain is Phenylalanine--tRNA ligase alpha subunit (335 aa).

Glutamate 262 is a Mg(2+) binding site.

It belongs to the class-II aminoacyl-tRNA synthetase family. Phe-tRNA synthetase alpha subunit type 1 subfamily. Tetramer of two alpha and two beta subunits. The cofactor is Mg(2+).

The protein resides in the cytoplasm. The catalysed reaction is tRNA(Phe) + L-phenylalanine + ATP = L-phenylalanyl-tRNA(Phe) + AMP + diphosphate + H(+). This is Phenylalanine--tRNA ligase alpha subunit from Prochlorococcus marinus subsp. pastoris (strain CCMP1986 / NIES-2087 / MED4).